A 293-amino-acid chain; its full sequence is 33 kDa chaperonin (293 aa).

Intrachain disulfides connect cysteine 229–cysteine 231 and cysteine 262–cysteine 265.

This sequence belongs to the HSP33 family. In terms of processing, under oxidizing conditions two disulfide bonds are formed involving the reactive cysteines. Under reducing conditions zinc is bound to the reactive cysteines and the protein is inactive.

The protein resides in the cytoplasm. Functionally, redox regulated molecular chaperone. Protects both thermally unfolding and oxidatively damaged proteins from irreversible aggregation. Plays an important role in the bacterial defense system toward oxidative stress. This Methylobacillus flagellatus (strain ATCC 51484 / DSM 6875 / VKM B-1610 / KT) protein is 33 kDa chaperonin.